The primary structure comprises 537 residues: RNA polymerase sigma-54 factor 2 (537 aa).

Residues Ala-52–Gly-90 are disordered. Residues Glu-55–Gly-66 are compositionally biased toward low complexity. The H-T-H motif DNA-binding region spans Asn-403–Thr-422. Residues Ala-492–Arg-500 carry the RPON box motif. Positions Ser-507–Ala-537 are disordered. Residues Ala-518 to Ser-528 show a composition bias toward polar residues.

The protein belongs to the sigma-54 factor family.

In terms of biological role, sigma factors are initiation factors that promote the attachment of RNA polymerase to specific initiation sites and are then released. This sigma factor is responsible for the expression of the nitrogen fixation genes. The sequence is that of RNA polymerase sigma-54 factor 2 (rpoN2) from Bradyrhizobium diazoefficiens (strain JCM 10833 / BCRC 13528 / IAM 13628 / NBRC 14792 / USDA 110).